The primary structure comprises 1288 residues: Photoreceptor cilium actin regulator (1288 aa).

G2 carries N-myristoyl glycine lipidation. Residue C3 is the site of S-palmitoyl cysteine attachment. 9 disordered regions span residues 78-147, 368-401, 423-453, 467-527, 563-605, 686-707, 813-1109, 1132-1169, and 1190-1288; these read MGDP…KWKR, QTSW…QQSP, QPRA…LGTS, PHLS…PFQA, DWSE…SHVE, QKCN…NAIP, AAKS…EDSQ, EAKP…SSGP, and LRRT…EEVS. 3 stretches are compositionally biased toward polar residues: residues 96-109, 382-401, and 434-453; these read TKTS…SQSH, SVTS…QQSP, and CLSS…LGTS. The segment covering 483–495 has biased composition (acidic residues); it reads DSEDSSPEEEEED. Polar residues-rich tracts occupy residues 848-857, 894-904, 927-946, and 966-976; these read SPESSKSTEN, SKSTASLTKPH, PPAT…QAEK, and PSGQNRTSESS. Low complexity predominate over residues 1018-1028; that stretch reads PAQPSPSAVQT. Pro residues-rich tracts occupy residues 1051-1063 and 1071-1094; these read PHQP…PPES and PSPP…PPMS. Basic and acidic residues predominate over residues 1097–1106; sequence QEHKETRDSE. The span at 1209 to 1226 shows a compositional bias: polar residues; sequence DPTSTSYESQLGQNSSSE. Positions 1268–1277 are enriched in basic and acidic residues; it reads RTGHIQDKSQ. A compositionally biased stretch (polar residues) spans 1278–1288; it reads PEAQPQQEEVS.

Specifically expressed in retina.

It localises to the cell projection. The protein resides in the cilium. It is found in the photoreceptor outer segment. Its subcellular location is the photoreceptor inner segment. Plays an essential role for normal photoreceptor cell maintenance and vision. In Homo sapiens (Human), this protein is Photoreceptor cilium actin regulator.